An 89-amino-acid chain; its full sequence is Neurotoxin beta-KTx 52.1 (89 aa).

A signal peptide spans 1–20 (MKQYIFFLALIVLTATFAEA). The propeptide occupies 21–39 (GKKTEILDKVKKVFSKAKD). One can recognise a BetaSPN-type CS-alpha/beta domain in the interval 53–89 (ELGCPFIDKWCEDHCDSKKLVGKCENFDCSCVKLGGK). Intrachain disulfides connect C56/C76, C63/C81, and C67/C83.

Belongs to the long chain scorpion toxin family. Class 2 subfamily. In terms of tissue distribution, expressed by the venom gland.

It is found in the secreted. Functionally, inhibits voltage-gated potassium channel. The chain is Neurotoxin beta-KTx 52.1 from Lychas mucronatus (Chinese swimming scorpion).